The primary structure comprises 595 residues: Leiomodin-1 (595 aa).

Disordered stretches follow at residues 1 to 322 and 467 to 568; these read MSKV…KVKN and DKQR…QEKN. Position 12 is a phosphoserine (Ser-12). Acidic residues predominate over residues 27-40; the sequence is EEMEELEKELDVVD. Basic and acidic residues-rich tracts occupy residues 72-105, 117-127, 134-193, 201-224, 232-251, 259-289, 467-476, and 484-493; these read CEKESKKIIQREMSVDESKQVGRKTDAKNGEDKG, QDSDVGKEPKK, FSRD…EKTG, SRDKDKKREEVKEPSKKEEVKLTA, RQEDGKQKESREDRDKKPEV, RDSRKEDEKVKKEETQPDKGVREEGKTREKQ, DKQRQKRLQE, and SGEKKDRLEV. Ser-85 is modified (phosphoserine). The residue at position 135 (Ser-135) is a Phosphoserine. A run of 8 repeats spans residues 165 to 180, 181 to 196, 197 to 212, 213 to 227, 228 to 243, 244 to 257, 258 to 273, and 274 to 288. Residues 165–288 are 8 X approximate tandem repeats; sequence AAVDRKEAGK…VREEGKTREK (124 aa). 2 stretches are compositionally biased toward pro residues: residues 503-513 and 527-538; these read SPKPSPQPSPK and AAPPPPPPPLAP. A 5 X 4 AA approximate tandem repeats region spans residues 503–522; the sequence is SPKPSPQPSPKSAPKNSPKK. Phosphoserine is present on Ser-550. The region spanning 569 to 588 is the WH2 domain; that stretch reads SRDQLLAAIRSSNLKQLKKV.

As to expression, detected in smooth muscle, in stomach and uterus, blood vessel wall, and in slow fibers in extraocular muscle, urinary bladder and sternothyroid muscle (at protein level).

The protein resides in the cytoplasm. It localises to the myofibril. Its subcellular location is the sarcomere. The protein localises to the cytoskeleton. Its function is as follows. Required for proper contractility of visceral smooth muscle cells. Mediates nucleation of actin filaments. The polypeptide is Leiomodin-1 (Rattus norvegicus (Rat)).